Reading from the N-terminus, the 527-residue chain is Cytochrome P450 714B3 (527 aa).

Residues 1 to 14 (MEVAMAMAVKVLLS) are Lumenal-facing. The helical; Signal-anchor for type III membrane protein transmembrane segment at 15 to 35 (LCCVGACGLAVYLYHILWLVP) threads the bilayer. At 36-527 (QKVLAKFEDQ…SVCTKRGTAI (492 aa)) the chain is on the cytoplasmic side. Residue cysteine 464 coordinates heme.

It belongs to the cytochrome P450 family. The cofactor is heme.

The protein resides in the membrane. In terms of biological role, may be involved in gibberellin metabolism. The chain is Cytochrome P450 714B3 (CYP714B3) from Zea mays (Maize).